The sequence spans 329 residues: Endochitinase A (329 aa).

The N-terminal stretch at 1-23 (MRLCKFTALSSLLFSLLLLSASA) is a signal peptide. The 42-residue stretch at 24 to 65 (EQCGSQAGGARCPSGLCCSKFGWCGNTNDYCGPGNCQSQCPG) folds into the Chitin-binding type-1 domain. 4 disulfide bridges follow: Cys26-Cys41, Cys35-Cys47, Cys40-Cys54, and Cys59-Cys63. Pro67 carries the post-translational modification 4-hydroxyproline; partial. A 4-hydroxyproline mark is found at Pro69, Pro71, Pro72, and Pro74. Residue Pro75 is modified to 4-hydroxyproline; partial. Disulfide bonds link Cys101-Cys163, Cys175-Cys183, and Cys282-Cys314. The Proton donor role is filled by Glu145. A propeptide spans 323–329 (GLLVDTM) (removed in mature form).

This sequence belongs to the glycosyl hydrolase 19 family. Chitinase class I subfamily. In terms of processing, the 4-hydroxyproline residues are not glycosylated in this plant vacuolar protein.

Its subcellular location is the vacuole. It carries out the reaction Random endo-hydrolysis of N-acetyl-beta-D-glucosaminide (1-&gt;4)-beta-linkages in chitin and chitodextrins.. Defense against chitin-containing fungal pathogens. In Nicotiana tabacum (Common tobacco), this protein is Endochitinase A (CHN48).